The sequence spans 248 residues: uncharacterized protein (248 aa).

A helical transmembrane segment spans residues 7–25 (TIFIGGIYGLGVYIGAVAW).

Belongs to the methyltransferase superfamily. METL family.

The protein localises to the mitochondrion inner membrane. Its function is as follows. Probable methyltransferase. This is an uncharacterized protein from Schizosaccharomyces pombe (strain 972 / ATCC 24843) (Fission yeast).